Here is a 313-residue protein sequence, read N- to C-terminus: Porphobilinogen deaminase (313 aa).

Cys-242 is modified (S-(dipyrrolylmethanemethyl)cysteine).

This sequence belongs to the HMBS family. In terms of assembly, monomer. The cofactor is dipyrromethane.

The enzyme catalyses 4 porphobilinogen + H2O = hydroxymethylbilane + 4 NH4(+). The protein operates within porphyrin-containing compound metabolism; protoporphyrin-IX biosynthesis; coproporphyrinogen-III from 5-aminolevulinate: step 2/4. Tetrapolymerization of the monopyrrole PBG into the hydroxymethylbilane pre-uroporphyrinogen in several discrete steps. The sequence is that of Porphobilinogen deaminase from Pseudomonas syringae pv. tomato (strain ATCC BAA-871 / DC3000).